The chain runs to 500 residues: Lycopene beta cyclase, chloroplastic (500 aa).

The N-terminal 81 residues, 1-81, are a transit peptide targeting the chloroplast; that stretch reads MDTLLKTPNN…ELPMYDPSKG (81 aa). Residue 86-114 coordinates NAD(+); it reads LAVVGGGPAGLAVAQQVSEAGLSVCSIDP.

Belongs to the lycopene cyclase family.

It is found in the plastid. The protein resides in the chloroplast. The catalysed reaction is a carotenoid psi-end group = a carotenoid beta-end derivative. Its pathway is carotenoid biosynthesis; beta-carotene biosynthesis. It participates in carotenoid biosynthesis; beta-zeacarotene biosynthesis. Functionally, catalyzes the double cyclization reaction which converts lycopene to beta-carotene and neurosporene to beta-zeacarotene. The polypeptide is Lycopene beta cyclase, chloroplastic (LCY1) (Solanum lycopersicum (Tomato)).